The following is a 433-amino-acid chain: Lipase 2 (433 aa).

The short motif at 165–167 (HGG) is the Involved in the stabilization of the negatively charged intermediate by the formation of the oxyanion hole element. Residue Ser239 is the Charge relay system of the active site. Active-site residues include Asp361 and His391.

This sequence belongs to the 'GDXG' lipolytic enzyme family.

It catalyses the reaction a triacylglycerol + H2O = a diacylglycerol + a fatty acid + H(+). The protein is Lipase 2 (lip2) of Moraxella sp. (strain TA144).